The chain runs to 208 residues: Non-specific lipid transfer protein GPI-anchored 4 (208 aa).

The first 25 residues, 1–25 (MKQSLLLSFVLLLLSSSSLVTPIHA), serve as a signal peptide directing secretion. N-linked (GlcNAc...) asparagine glycans are attached at residues N27, N67, and N105. Disulfide bonds link C48–C91, C58–C75, C76–C116, and C89–C125. The disordered stretch occupies residues 136-181 (GASPVSPSAGAPTTSPSAAKSPETSATSPSSDETPSMTAPSPSSSG). The GPI-anchor amidated serine moiety is linked to residue S179. Residues 180–208 (SGTNILSVPALTIVFVIVSSVAYISAFSN) constitute a propeptide, removed in mature form.

The protein belongs to the plant LTP family. In terms of tissue distribution, confined to the anthers and stamen of the inflorescence, especially in pollen.

The protein resides in the cell membrane. Lipid transfer protein involved in seed and ovule maturation and development, probably by regulating the fatty acids homeostasis during suberin and sporopollenin biosynthesis or deposition. This Arabidopsis thaliana (Mouse-ear cress) protein is Non-specific lipid transfer protein GPI-anchored 4.